The chain runs to 449 residues: Histone PARylation factor 1-like (449 aa).

A CCHC-type zinc finger spans residues 3 to 28 (KEDCKYWDKCYQQNPAHLSKYNHPKK). The disordered stretch occupies residues 18 to 93 (AHLSKYNHPK…AKGSYEAETE (76 aa)). Composition is skewed to basic and acidic residues over residues 28–41 (KQQEHEVDGAEGKK) and 54–69 (EQKKEEQTEPVNKDKS). S72 carries the phosphoserine modification. Catalysis depends on E384, which acts as the Proton donor.

It belongs to the HPF1 family.

It is found in the chromosome. It localises to the nucleus. Cofactor for serine ADP-ribosylation that confers serine specificity on Parp. Switches the amino acid specificity of Parp from aspartate or glutamate to serine residues. Acts by completing the active site of Parp: forms a composite active site composed of residues from HPF1/CG1218 and Parp. This chain is Histone PARylation factor 1-like, found in Drosophila melanogaster (Fruit fly).